The chain runs to 222 residues: Large ribosomal subunit protein uL4 (222 aa).

Positions Ala-42–Arg-100 are disordered. The segment covering Gly-60 to Gly-71 has biased composition (basic residues).

The protein belongs to the universal ribosomal protein uL4 family. Part of the 50S ribosomal subunit.

Its function is as follows. One of the primary rRNA binding proteins, this protein initially binds near the 5'-end of the 23S rRNA. It is important during the early stages of 50S assembly. It makes multiple contacts with different domains of the 23S rRNA in the assembled 50S subunit and ribosome. In terms of biological role, forms part of the polypeptide exit tunnel. This Thermobifida fusca (strain YX) protein is Large ribosomal subunit protein uL4.